We begin with the raw amino-acid sequence, 861 residues long: DNA topoisomerase 1 (861 aa).

Positions 3–141 (KSLVIVESPA…KFSRVVFNEI (139 aa)) constitute a Toprim domain. Glu-9 and Asp-110 together coordinate Mg(2+). Residues 157-572 (NMNRVHAQQA…DFFKKFSEQL (416 aa)) form the Topo IA-type catalytic domain. The interval 191–196 (SAGRVQ) is interaction with DNA. Tyr-318 (O-(5'-phospho-DNA)-tyrosine intermediate) is an active-site residue. 3 consecutive C4-type zinc fingers follow at residues 596–628 (CPIC…KKRC), 658–685 (CDIC…NPSC), and 707–732 (CEKC…NKIC).

It belongs to the type IA topoisomerase family. As to quaternary structure, monomer. Mg(2+) serves as cofactor.

The catalysed reaction is ATP-independent breakage of single-stranded DNA, followed by passage and rejoining.. Releases the supercoiling and torsional tension of DNA, which is introduced during the DNA replication and transcription, by transiently cleaving and rejoining one strand of the DNA duplex. Introduces a single-strand break via transesterification at a target site in duplex DNA. The scissile phosphodiester is attacked by the catalytic tyrosine of the enzyme, resulting in the formation of a DNA-(5'-phosphotyrosyl)-enzyme intermediate and the expulsion of a 3'-OH DNA strand. The free DNA strand then undergoes passage around the unbroken strand, thus removing DNA supercoils. Finally, in the religation step, the DNA 3'-OH attacks the covalent intermediate to expel the active-site tyrosine and restore the DNA phosphodiester backbone. The sequence is that of DNA topoisomerase 1 from Buchnera aphidicola subsp. Acyrthosiphon pisum (strain APS) (Acyrthosiphon pisum symbiotic bacterium).